Here is a 291-residue protein sequence, read N- to C-terminus: Formamidopyrimidine-DNA glycosylase (291 aa).

Residue Pro-2 is the Schiff-base intermediate with DNA of the active site. Glu-3 acts as the Proton donor in catalysis. The active-site Proton donor; for beta-elimination activity is the Lys-58. The DNA site is built by His-104, Arg-127, and Arg-172. An FPG-type zinc finger spans residues 257–291 (FVYDRAGLPCRACGTPIRQIVQGQRSTFCCPTCQR). Arg-281 serves as the catalytic Proton donor; for delta-elimination activity.

The protein belongs to the FPG family. In terms of assembly, monomer. The cofactor is Zn(2+).

It carries out the reaction Hydrolysis of DNA containing ring-opened 7-methylguanine residues, releasing 2,6-diamino-4-hydroxy-5-(N-methyl)formamidopyrimidine.. The catalysed reaction is 2'-deoxyribonucleotide-(2'-deoxyribose 5'-phosphate)-2'-deoxyribonucleotide-DNA = a 3'-end 2'-deoxyribonucleotide-(2,3-dehydro-2,3-deoxyribose 5'-phosphate)-DNA + a 5'-end 5'-phospho-2'-deoxyribonucleoside-DNA + H(+). In terms of biological role, involved in base excision repair of DNA damaged by oxidation or by mutagenic agents. Acts as a DNA glycosylase that recognizes and removes damaged bases. Has a preference for oxidized purines, such as 7,8-dihydro-8-oxoguanine (8-oxoG). Has AP (apurinic/apyrimidinic) lyase activity and introduces nicks in the DNA strand. Cleaves the DNA backbone by beta-delta elimination to generate a single-strand break at the site of the removed base with both 3'- and 5'-phosphates. In Ralstonia pickettii (strain 12J), this protein is Formamidopyrimidine-DNA glycosylase.